The sequence spans 345 residues: PI-PLC X domain-containing protein 1 (345 aa).

The PI-PLC X-box domain occupies 52 to 228 (QLWDVPLHHL…QVIVSYEDEA (177 aa)).

In terms of tissue distribution, expressed at highest levels in brain and kidney. Also detected in stomach, thymus and skeletal muscle.

It is found in the cytoplasm. The protein is PI-PLC X domain-containing protein 1 (Plcxd1) of Mus musculus (Mouse).